A 204-amino-acid chain; its full sequence is UPF0056 membrane protein CT_852 (204 aa).

The next 6 membrane-spanning stretches (helical) occupy residues 9 to 29 (TLLFYALFNALGSLPVFIALL), 39 to 59 (HIILRESIFALLLLLLFVTFG), 66 to 86 (LGIILPAFQFTGSLLLGSIAI), 107 to 127 (IFFPLAFPVITGPAMITSTLG), 138 to 158 (IVLGAIVLAWLFSLITLLLSS), and 176 to 196 (FGISLALMAGNLMLKALSTAF).

Belongs to the UPF0056 (MarC) family.

It localises to the cell membrane. This Chlamydia trachomatis serovar D (strain ATCC VR-885 / DSM 19411 / UW-3/Cx) protein is UPF0056 membrane protein CT_852.